A 140-amino-acid chain; its full sequence is Ribonuclease P protein component (140 aa).

Residues 115–140 (RCKPGAPKPPPFKKRPNKSVKSNKQT) are disordered.

This sequence belongs to the RnpA family. Consists of a catalytic RNA component (M1 or rnpB) and a protein subunit.

It carries out the reaction Endonucleolytic cleavage of RNA, removing 5'-extranucleotides from tRNA precursor.. Functionally, RNaseP catalyzes the removal of the 5'-leader sequence from pre-tRNA to produce the mature 5'-terminus. It can also cleave other RNA substrates such as 4.5S RNA. The protein component plays an auxiliary but essential role in vivo by binding to the 5'-leader sequence and broadening the substrate specificity of the ribozyme. The chain is Ribonuclease P protein component from Pseudoalteromonas translucida (strain TAC 125).